We begin with the raw amino-acid sequence, 910 residues long: Anoctamin-6 (910 aa).

The Cytoplasmic segment spans residues 1–300 (MKKMSRNVLL…YGEKIGIYFA (300 aa)). Residues 301-321 (WLGYYTQMLLLAAVVGVACFL) traverse the membrane as a helical segment. Residues 322 to 375 (YGYLNQDNCTWSKEVCHPDIGGKIIMCPQCDRLCPFWKLNITCESSKKLCIFDS) lie on the Extracellular side of the membrane. N-linked (GlcNAc...) asparagine glycosylation occurs at asparagine 329. Cystine bridges form between cysteine 330/cysteine 371, cysteine 337/cysteine 364, cysteine 348/cysteine 806, cysteine 351/cysteine 355, and cysteine 595/cysteine 600. N-linked (GlcNAc...) asparagine glycosylation is present at asparagine 361. A helical membrane pass occupies residues 376 to 396 (FGTLVFAVFMGVWVTLFLEFW). Over 397–455 (KRRQAELEYEWDTVELQQEEQARPEYEARCTHVVINEITQEEERIPFTAWGKCIRITLC) the chain is Cytoplasmic. The helical transmembrane segment at 456–476 (ASAVFFWILLIIASVIGIIVY) threads the bilayer. Residues 477 to 509 (RLSVFIVFSAKLPKNINGTDPIQKYLTPQTATS) are Extracellular-facing. N-linked (GlcNAc...) asparagine glycosylation is present at asparagine 493. Residues 510–530 (ITASIISFIIIMILNTIYEKV) traverse the membrane as a helical segment. The Cytoplasmic portion of the chain corresponds to 531–551 (AIMITNFELPRTQTDYENSLT). A helical transmembrane segment spans residues 552–572 (MKMFLFQFVNYYSSCFYIAFF). Over 573 to 601 (KGKFVGYPGDPVYWLGKYRNEECDPGGCL) the chain is Extracellular. Residues 602-621 (LELTTQLTIIMGGKAIWNNI) form a helical membrane-spanning segment. Topologically, residues 622-663 (QEVLLPWIMNLIGRFHRVSGSEKITPRWEQDYHLQPMGKLGL) are cytoplasmic. Glutamate 623, glutamate 666, and glutamate 669 together coordinate Ca(2+). Helical transmembrane passes span 664-684 (FYEY…VASF) and 685-705 (PLAP…DAWK). Topologically, residues 706–722 (LTTQFRRLVPEKAQDIG) are cytoplasmic. A helical membrane pass occupies residues 723–743 (AWQPIMQGIAILAVVTNAMII). At 744-836 (AFTSDMIPRL…YWHVIAAKLA (93 aa)) the chain is on the extracellular side. Asparagine 777, asparagine 790, and asparagine 802 each carry an N-linked (GlcNAc...) asparagine glycan. A helical membrane pass occupies residues 837-857 (FIIVMEHVIYSVKFFISYAIP). Topologically, residues 858-910 (DVSKRTKSKIQREKYLTQKLLHENHLKDMTKNMGVIAERMIEAVDNNLRPKSE) are cytoplasmic.

This sequence belongs to the anoctamin family. In terms of assembly, homodimer. In terms of tissue distribution, expressed in embryonic stem cell, fetal liver, retina, chronic myologenous leukemia and intestinal cancer.

The protein localises to the cell membrane. It carries out the reaction a 1,2-diacyl-sn-glycero-3-phospho-L-serine(in) = a 1,2-diacyl-sn-glycero-3-phospho-L-serine(out). The catalysed reaction is a beta-D-galactosyl-(1&lt;-&gt;1')-N-acylsphing-4-enine(out) = a beta-D-galactosyl-(1&lt;-&gt;1')-N-acylsphing-4-enine(in). It catalyses the reaction a 1,2-diacyl-sn-glycero-3-phosphocholine(in) = a 1,2-diacyl-sn-glycero-3-phosphocholine(out). Exhibits synergistic gating by Ca(2+) and voltage. Inhibited by some non-specific cation channel blockers such as: ruthenium red, 2-aminoethyl diphenylborinate (2APB), gadolinium and cadmium ions. With respect to regulation, (Microbial infection) Activated by SARS coronavirus-2/SARS-CoV-2 spike protein. Functionally, small-conductance calcium-activated nonselective cation (SCAN) channel which acts as a regulator of phospholipid scrambling in platelets and osteoblasts. Phospholipid scrambling results in surface exposure of phosphatidylserine which in platelets is essential to trigger the clotting system whereas in osteoblasts is essential for the deposition of hydroxyapatite during bone mineralization. Has calcium-dependent phospholipid scramblase activity; scrambles phosphatidylserine, phosphatidylcholine and galactosylceramide. Can generate outwardly rectifying chloride channel currents in airway epithelial cells and Jurkat T lymphocytes. Its function is as follows. (Microbial infection) Upon SARS coronavirus-2/SARS-CoV-2 infection, is activated by spike protein which increases the amplitude of spontaneous Ca(2+) signals and is required for spike-mediated syncytia. This Homo sapiens (Human) protein is Anoctamin-6.